A 20-amino-acid chain; its full sequence is Cytochrome c oxidase subunit 6A1, mitochondrial (20 aa).

This sequence belongs to the cytochrome c oxidase subunit 6A family. Component of the cytochrome c oxidase (complex IV, CIV), a multisubunit enzyme composed of 14 subunits. The complex is composed of a catalytic core of 3 subunits MT-CO1, MT-CO2 and MT-CO3, encoded in the mitochondrial DNA, and 11 supernumerary subunits COX4I, COX5A, COX5B, COX6A, COX6B, COX6C, COX7A, COX7B, COX7C, COX8 and NDUFA4, which are encoded in the nuclear genome. The complex exists as a monomer or a dimer and forms supercomplexes (SCs) in the inner mitochondrial membrane with NADH-ubiquinone oxidoreductase (complex I, CI) and ubiquinol-cytochrome c oxidoreductase (cytochrome b-c1 complex, complex III, CIII), resulting in different assemblies (supercomplex SCI(1)III(2)IV(1) and megacomplex MCI(2)III(2)IV(2)). As to expression, liver specific isoform.

It is found in the mitochondrion inner membrane. The protein operates within energy metabolism; oxidative phosphorylation. In terms of biological role, component of the cytochrome c oxidase, the last enzyme in the mitochondrial electron transport chain which drives oxidative phosphorylation. The respiratory chain contains 3 multisubunit complexes succinate dehydrogenase (complex II, CII), ubiquinol-cytochrome c oxidoreductase (cytochrome b-c1 complex, complex III, CIII) and cytochrome c oxidase (complex IV, CIV), that cooperate to transfer electrons derived from NADH and succinate to molecular oxygen, creating an electrochemical gradient over the inner membrane that drives transmembrane transport and the ATP synthase. Cytochrome c oxidase is the component of the respiratory chain that catalyzes the reduction of oxygen to water. Electrons originating from reduced cytochrome c in the intermembrane space (IMS) are transferred via the dinuclear copper A center (CU(A)) of subunit 2 and heme A of subunit 1 to the active site in subunit 1, a binuclear center (BNC) formed by heme A3 and copper B (CU(B)). The BNC reduces molecular oxygen to 2 water molecules unsing 4 electrons from cytochrome c in the IMS and 4 protons from the mitochondrial matrix. In Canis lupus familiaris (Dog), this protein is Cytochrome c oxidase subunit 6A1, mitochondrial (COX6A1).